Reading from the N-terminus, the 222-residue chain is ATP-dependent dethiobiotin synthetase BioD 2 (222 aa).

T17 provides a ligand contact to Mg(2+). K38 is an active-site residue. A substrate-binding site is contributed by T42. Mg(2+) contacts are provided by D55 and E112. Residues D55, 112–115 (EGCG), 172–173 (NR), 201–203 (PYL), and E208 contribute to the ATP site.

This sequence belongs to the dethiobiotin synthetase family. Homodimer. Mg(2+) is required as a cofactor.

The protein localises to the cytoplasm. It carries out the reaction (7R,8S)-7,8-diammoniononanoate + CO2 + ATP = (4R,5S)-dethiobiotin + ADP + phosphate + 3 H(+). Its pathway is cofactor biosynthesis; biotin biosynthesis; biotin from 7,8-diaminononanoate: step 1/2. In terms of biological role, catalyzes a mechanistically unusual reaction, the ATP-dependent insertion of CO2 between the N7 and N8 nitrogen atoms of 7,8-diaminopelargonic acid (DAPA, also called 7,8-diammoniononanoate) to form a ureido ring. The protein is ATP-dependent dethiobiotin synthetase BioD 2 of Yersinia pestis.